Consider the following 279-residue polypeptide: Methylthioribulose-1-phosphate dehydratase (279 aa).

Residue Cys132 participates in substrate binding. Residues His150 and His152 each contribute to the Zn(2+) site. The active-site Proton donor/acceptor is Glu175. His240 is a binding site for Zn(2+).

It belongs to the aldolase class II family. MtnB subfamily. Zn(2+) is required as a cofactor.

It localises to the cytoplasm. It catalyses the reaction 5-(methylsulfanyl)-D-ribulose 1-phosphate = 5-methylsulfanyl-2,3-dioxopentyl phosphate + H2O. The protein operates within amino-acid biosynthesis; L-methionine biosynthesis via salvage pathway; L-methionine from S-methyl-5-thio-alpha-D-ribose 1-phosphate: step 2/6. Its function is as follows. Catalyzes the dehydration of methylthioribulose-1-phosphate (MTRu-1-P) into 2,3-diketo-5-methylthiopentyl-1-phosphate (DK-MTP-1-P). This Candida tropicalis (strain ATCC MYA-3404 / T1) (Yeast) protein is Methylthioribulose-1-phosphate dehydratase.